The following is a 239-amino-acid chain: Pyridoxine 5'-phosphate synthase (239 aa).

Asn-7 is a binding site for 3-amino-2-oxopropyl phosphate. A 1-deoxy-D-xylulose 5-phosphate-binding site is contributed by 9 to 10 (DH). Arg-18 is a binding site for 3-amino-2-oxopropyl phosphate. Catalysis depends on His-43, which acts as the Proton acceptor. Residues Arg-45 and His-50 each coordinate 1-deoxy-D-xylulose 5-phosphate. Glu-70 (proton acceptor) is an active-site residue. 1-deoxy-D-xylulose 5-phosphate is bound at residue Thr-100. Catalysis depends on His-191, which acts as the Proton donor. 3-amino-2-oxopropyl phosphate-binding positions include Gly-192 and 213–214 (GH).

This sequence belongs to the PNP synthase family. Homooctamer; tetramer of dimers.

The protein localises to the cytoplasm. The catalysed reaction is 3-amino-2-oxopropyl phosphate + 1-deoxy-D-xylulose 5-phosphate = pyridoxine 5'-phosphate + phosphate + 2 H2O + H(+). It functions in the pathway cofactor biosynthesis; pyridoxine 5'-phosphate biosynthesis; pyridoxine 5'-phosphate from D-erythrose 4-phosphate: step 5/5. In terms of biological role, catalyzes the complicated ring closure reaction between the two acyclic compounds 1-deoxy-D-xylulose-5-phosphate (DXP) and 3-amino-2-oxopropyl phosphate (1-amino-acetone-3-phosphate or AAP) to form pyridoxine 5'-phosphate (PNP) and inorganic phosphate. This Synechococcus sp. (strain JA-2-3B'a(2-13)) (Cyanobacteria bacterium Yellowstone B-Prime) protein is Pyridoxine 5'-phosphate synthase.